Here is a 426-residue protein sequence, read N- to C-terminus: Transcription termination factor Rho (426 aa).

The 74-residue stretch at Q58–D131 folds into the Rho RNA-BD domain. ATP-binding positions include G176–A181, K188–T193, and R219.

It belongs to the Rho family. As to quaternary structure, homohexamer. The homohexamer assembles into an open ring structure.

Facilitates transcription termination by a mechanism that involves Rho binding to the nascent RNA, activation of Rho's RNA-dependent ATPase activity, and release of the mRNA from the DNA template. The chain is Transcription termination factor Rho from Deinococcus radiodurans (strain ATCC 13939 / DSM 20539 / JCM 16871 / CCUG 27074 / LMG 4051 / NBRC 15346 / NCIMB 9279 / VKM B-1422 / R1).